The chain runs to 317 residues: Transaldolase (317 aa).

The active-site Schiff-base intermediate with substrate is Lys126.

The protein belongs to the transaldolase family. Type 1 subfamily. Homodimer.

The protein resides in the cytoplasm. It carries out the reaction D-sedoheptulose 7-phosphate + D-glyceraldehyde 3-phosphate = D-erythrose 4-phosphate + beta-D-fructose 6-phosphate. It participates in carbohydrate degradation; pentose phosphate pathway; D-glyceraldehyde 3-phosphate and beta-D-fructose 6-phosphate from D-ribose 5-phosphate and D-xylulose 5-phosphate (non-oxidative stage): step 2/3. Functionally, transaldolase is important for the balance of metabolites in the pentose-phosphate pathway. This Burkholderia thailandensis (strain ATCC 700388 / DSM 13276 / CCUG 48851 / CIP 106301 / E264) protein is Transaldolase.